The chain runs to 1934 residues: Myosin-7 (1934 aa).

One can recognise a Myosin N-terminal SH3-like domain in the interval 31–80 (DLKKDVFVPDDKEEFVKAKIVSREGGKVTAETENGKTVTVKEDQVMQQNP). Residues 84–777 (DKIEDMAMLT…LLGLLEEMRD (694 aa)) enclose the Myosin motor domain. The residue at position 128 (K128) is an N6,N6,N6-trimethyllysine. An ATP-binding site is contributed by 177-184 (GESGAGKT). The residue at position 377 (T377) is a Phosphothreonine. Actin-binding stretches follow at residues 654–676 (LNKL…IPNE) and 756–770 (KFGH…GLLG). The IQ domain occupies 780–809 (LSRIITRIQAQSRGLLSRMEFKKLLERRDS). Residues 839–1934 (LKSAETEKEM…DIGAKGLNEE (1096 aa)) adopt a coiled-coil conformation. 2 positions are modified to phosphoserine: S1136 and S1268. Phosphothreonine is present on T1281. Residue Y1307 is modified to Phosphotyrosine. T1308 carries the phosphothreonine modification. S1509 is modified (phosphoserine). T1512 bears the Phosphothreonine mark. The tract at residues 1914–1934 (SQVNKLRAKSRDIGAKGLNEE) is disordered. The segment covering 1922–1934 (KSRDIGAKGLNEE) has biased composition (basic and acidic residues).

The protein belongs to the TRAFAC class myosin-kinesin ATPase superfamily. Myosin family. In terms of assembly, muscle myosin is a hexameric protein that consists of 2 heavy chain subunits (MHC), 2 alkali light chain subunits (MLC) and 2 regulatory light chain subunits (MLC-2). Interacts with ECPAS. Interacts (via C-terminus) with LRRC39.

It localises to the cytoplasm. The protein resides in the myofibril. The protein localises to the sarcomere. Myosins are actin-based motor molecules with ATPase activity essential for muscle contraction. Forms regular bipolar thick filaments that, together with actin thin filaments, constitute the fundamental contractile unit of skeletal and cardiac muscle. The chain is Myosin-7 (MYH7) from Mesocricetus auratus (Golden hamster).